The chain runs to 329 residues: Ribonucleoside-diphosphate reductase subunit beta (329 aa).

Aspartate 66, glutamate 97, and histidine 101 together coordinate Fe cation. Tyrosine 105 is an active-site residue. Fe cation-binding residues include glutamate 164, glutamate 198, and histidine 201.

This sequence belongs to the ribonucleoside diphosphate reductase small chain family. As to quaternary structure, tetramer of two alpha and two beta subunits. Fe cation is required as a cofactor.

It catalyses the reaction a 2'-deoxyribonucleoside 5'-diphosphate + [thioredoxin]-disulfide + H2O = a ribonucleoside 5'-diphosphate + [thioredoxin]-dithiol. Its function is as follows. Provides the precursors necessary for DNA synthesis. Catalyzes the biosynthesis of deoxyribonucleotides from the corresponding ribonucleotides. The sequence is that of Ribonucleoside-diphosphate reductase subunit beta (nrdF) from Bacillus subtilis (strain 168).